Reading from the N-terminus, the 205-residue chain is GTP cyclohydrolase-2 (205 aa).

Position 49–53 (49–53 (RIHSE)) interacts with GTP. Zn(2+) contacts are provided by Cys-54, Cys-65, and Cys-67. GTP-binding positions include Gln-70, 92-94 (EGR), and Thr-114. Catalysis depends on Asp-126, which acts as the Proton acceptor. Arg-128 acts as the Nucleophile in catalysis. Positions 149 and 154 each coordinate GTP.

Belongs to the GTP cyclohydrolase II family. Requires Zn(2+) as cofactor.

It catalyses the reaction GTP + 4 H2O = 2,5-diamino-6-hydroxy-4-(5-phosphoribosylamino)-pyrimidine + formate + 2 phosphate + 3 H(+). It functions in the pathway cofactor biosynthesis; riboflavin biosynthesis; 5-amino-6-(D-ribitylamino)uracil from GTP: step 1/4. Functionally, catalyzes the conversion of GTP to 2,5-diamino-6-ribosylamino-4(3H)-pyrimidinone 5'-phosphate (DARP), formate and pyrophosphate. This Shewanella denitrificans (strain OS217 / ATCC BAA-1090 / DSM 15013) protein is GTP cyclohydrolase-2.